Here is a 41-residue protein sequence, read N- to C-terminus: Large ribosomal subunit protein bL36 (41 aa).

Belongs to the bacterial ribosomal protein bL36 family.

The polypeptide is Large ribosomal subunit protein bL36 (Rickettsia prowazekii (strain Madrid E)).